The primary structure comprises 429 residues: Bifunctional protein GlmU (429 aa).

The pyrophosphorylase stretch occupies residues 1–223 (MKTSILILAA…EDEFMGINDK (223 aa)). UDP-N-acetyl-alpha-D-glucosamine contacts are provided by residues 8-11 (LAAG), lysine 22, and 81-82 (GT). Position 102 (aspartate 102) interacts with Mg(2+). Residues glycine 135, glutamate 149, asparagine 164, and asparagine 221 each contribute to the UDP-N-acetyl-alpha-D-glucosamine site. A Mg(2+)-binding site is contributed by asparagine 221. Residues 224 to 244 (FELSIAENFMQEKIKKYWMQQ) are linker. Residues 245-429 (GVIFHLPQST…KDYYYKKFQK (185 aa)) are N-acetyltransferase. Residues arginine 308 and lysine 325 each contribute to the UDP-N-acetyl-alpha-D-glucosamine site. Histidine 336 serves as the catalytic Proton acceptor. 2 residues coordinate UDP-N-acetyl-alpha-D-glucosamine: tyrosine 339 and asparagine 350. Residues 359 to 360 (NY), serine 378, alanine 396, and arginine 413 contribute to the acetyl-CoA site.

The protein in the N-terminal section; belongs to the N-acetylglucosamine-1-phosphate uridyltransferase family. In the C-terminal section; belongs to the transferase hexapeptide repeat family. Homotrimer. It depends on Mg(2+) as a cofactor.

The protein localises to the cytoplasm. The enzyme catalyses alpha-D-glucosamine 1-phosphate + acetyl-CoA = N-acetyl-alpha-D-glucosamine 1-phosphate + CoA + H(+). The catalysed reaction is N-acetyl-alpha-D-glucosamine 1-phosphate + UTP + H(+) = UDP-N-acetyl-alpha-D-glucosamine + diphosphate. Its pathway is nucleotide-sugar biosynthesis; UDP-N-acetyl-alpha-D-glucosamine biosynthesis; N-acetyl-alpha-D-glucosamine 1-phosphate from alpha-D-glucosamine 6-phosphate (route II): step 2/2. The protein operates within nucleotide-sugar biosynthesis; UDP-N-acetyl-alpha-D-glucosamine biosynthesis; UDP-N-acetyl-alpha-D-glucosamine from N-acetyl-alpha-D-glucosamine 1-phosphate: step 1/1. It participates in bacterial outer membrane biogenesis; LPS lipid A biosynthesis. Functionally, catalyzes the last two sequential reactions in the de novo biosynthetic pathway for UDP-N-acetylglucosamine (UDP-GlcNAc). The C-terminal domain catalyzes the transfer of acetyl group from acetyl coenzyme A to glucosamine-1-phosphate (GlcN-1-P) to produce N-acetylglucosamine-1-phosphate (GlcNAc-1-P), which is converted into UDP-GlcNAc by the transfer of uridine 5-monophosphate (from uridine 5-triphosphate), a reaction catalyzed by the N-terminal domain. The polypeptide is Bifunctional protein GlmU (Campylobacter jejuni subsp. jejuni serotype O:23/36 (strain 81-176)).